The chain runs to 1040 residues: Multidrug resistance protein MdtB (1040 aa).

12 consecutive transmembrane segments (helical) span residues 16 to 36, 347 to 367, 369 to 389, 396 to 416, 440 to 460, 472 to 492, 537 to 557, 863 to 883, 888 to 908, 911 to 931, 968 to 988, and 998 to 1018; these read FIMRPVATTLLMVAILLAGII, LMMAIALVVMIIYLFLRNIPA, IIPGVAVPLSLIGTFAVMVFL, LTLMALTIATGFVVDDAIVVI, IGFTIISLTFSLIAVLIPLLF, FAITLAVAILISAVVSLTLTP, WLTLSVALSTLLLSVLLWVFI, LGSTVWLIVAAVVAMYIVLGI, FIHPITILSTLPTAGVGALLA, IAGSELDVIAIIGIILLIGIV, ILMTTLAALLGALPLMLSTGV, and IGMVGGLIVSQVLTLFTTPVI.

The protein belongs to the resistance-nodulation-cell division (RND) (TC 2.A.6) family. MdtB subfamily. As to quaternary structure, part of a tripartite efflux system composed of MdtA, MdtB and MdtC. MdtB forms a heteromultimer with MdtC.

The protein resides in the cell inner membrane. Functionally, the MdtABC tripartite complex confers resistance against novobiocin and deoxycholate. This Escherichia coli (strain K12 / MC4100 / BW2952) protein is Multidrug resistance protein MdtB.